Consider the following 261-residue polypeptide: Tryptophan synthase alpha chain (261 aa).

Residues glutamate 47 and aspartate 58 each act as proton acceptor in the active site.

Belongs to the TrpA family. As to quaternary structure, tetramer of two alpha and two beta chains.

It catalyses the reaction (1S,2R)-1-C-(indol-3-yl)glycerol 3-phosphate + L-serine = D-glyceraldehyde 3-phosphate + L-tryptophan + H2O. Its pathway is amino-acid biosynthesis; L-tryptophan biosynthesis; L-tryptophan from chorismate: step 5/5. The alpha subunit is responsible for the aldol cleavage of indoleglycerol phosphate to indole and glyceraldehyde 3-phosphate. In Neisseria meningitidis serogroup A / serotype 4A (strain DSM 15465 / Z2491), this protein is Tryptophan synthase alpha chain.